Consider the following 185-residue polypeptide: Ribosome-recycling factor (185 aa).

Belongs to the RRF family.

It localises to the cytoplasm. Its function is as follows. Responsible for the release of ribosomes from messenger RNA at the termination of protein biosynthesis. May increase the efficiency of translation by recycling ribosomes from one round of translation to another. This Pseudomonas fluorescens (strain SBW25) protein is Ribosome-recycling factor.